The primary structure comprises 472 residues: Glycylpeptide N-tetradecanoyltransferase (472 aa).

Disordered regions lie at residues 1-23 (MPNE…EVAD) and 43-65 (STNA…ASVS). Phe-93, Trp-94, Phe-223, Leu-224, Cys-225, Val-226, Ser-232, Arg-234, Val-235, and Ala-236 together coordinate tetradecanoyl-CoA.

The protein belongs to the NMT family.

The protein resides in the membrane. The enzyme catalyses N-terminal glycyl-[protein] + tetradecanoyl-CoA = N-tetradecanoylglycyl-[protein] + CoA + H(+). Its function is as follows. Adds a myristoyl group (tetradecanoyl group) to the N-terminal glycine residue of certain cellular proteins. Such protein modification are critical for the developmental processes that involve cell shape changes and movement. In Drosophila melanogaster (Fruit fly), this protein is Glycylpeptide N-tetradecanoyltransferase (Nmt).